The primary structure comprises 456 residues: Coenzyme F420 hydrogenase subunit alpha (456 aa).

The Ni(2+) site is built by Cys63, Cys66, Cys432, and Cys435.

It belongs to the [NiFe]/[NiFeSe] hydrogenase large subunit family. As to quaternary structure, pentamer of two alpha chains, two beta chains and a gamma chain. Ni(2+) serves as cofactor. The cofactor is iron-sulfur cluster. It depends on FAD as a cofactor.

It is found in the cell membrane. The enzyme catalyses oxidized coenzyme F420-(gamma-L-Glu)(n) + H2 + H(+) = reduced coenzyme F420-(gamma-L-Glu)(n). Its function is as follows. Reduces the physiological low-potential two-electron acceptor coenzyme F420, and the artificial one-electron acceptor methylviologen. This chain is Coenzyme F420 hydrogenase subunit alpha (frhA), found in Methanosarcina barkeri (strain Fusaro / DSM 804).